We begin with the raw amino-acid sequence, 1204 residues long: Bromodomain and PHD finger-containing protein 3 (1204 aa).

Disordered regions lie at residues 1 to 27 (MRKP…KCSP) and 76 to 127 (SNKE…TGSQ). Residues 89 to 99 (KSKKPSSKGKR) are compositionally biased toward basic residues. The PHD-type 1 zinc finger occupies 212–262 (DAFCCVCLDDECHNSNVILFCDICNLAVHQECYGVPYIPEGQWLCRCCLQS). The segment at 266–299 (PVDCVLCPNKGGAFKQTSDGHWAHVVCAIWIPEV) adopts a C2HC pre-PHD-type zinc-finger fold. Residues 323–387 (LTCYICKQKG…RKTAYCEAHS (65 aa)) form a PHD-type 2 zinc finger. The segment at 393–464 (ARRKGDSPRS…KKEPEEAGRE (72 aa)) is disordered. Residues S399 and S402 each carry the phosphoserine modification. Positions 417–429 (GEEEQEEAEEEGQ) are enriched in acidic residues. Residues 442 to 454 (VSKKGKMSLKQKI) show a composition bias toward basic residues. K445, K447, and K670 each carry N6-acetyllysine. The 105-residue stretch at 588-692 (LELMPFTVLL…DLGGAILRHA (105 aa)) folds into the Bromo domain. Phosphoserine is present on residues S712 and S739. The tract at residues 778–879 (RQKLAQPPPP…FLKSRKVEDE (102 aa)) is disordered. Positions 816 to 826 (QQEEPEEEGDR) are enriched in acidic residues. 3 positions are modified to phosphoserine: S899, S961, and S964. The segment at 903-1015 (IDRLSLTNPD…ESGSDSECSL (113 aa)) is disordered. Residues 979–990 (SCSDSEGERSPQ) show a composition bias toward basic and acidic residues. In terms of domain architecture, PWWP spans 1075–1158 (PLELVWAKCR…RDKVLPLGVE (84 aa)).

As to quaternary structure, component of some HBO1 complexes composed of KAT7/HBO1, MEAF6, ING4 or ING5, and BRPF3. Component of the MOZ/MORF complex composed at least of ING5, KAT6A, KAT6B, MEAF6 and one of BRPF1, BRD1/BRPF2 and BRPF3. Interacts with KAT7/HBO1; the interaction is direct. As to expression, highly expressed in the adult testis and brain.

It localises to the nucleus. Scaffold subunit of various histone acetyltransferase (HAT) complexes, such as the MOZ/MORF and HBO1 complexes, which have a histone H3 acetyltransferase activity. Plays a role in DNA replication initiation by directing KAT7/HBO1 specificity towards histone H3 'Lys-14' acetylation (H3K14ac), thereby facilitating the activation of replication origins. Component of the MOZ/MORF complex which has a histone H3 acetyltransferase activity. The protein is Bromodomain and PHD finger-containing protein 3 of Mus musculus (Mouse).